A 330-amino-acid chain; its full sequence is Beta-ketoacyl-[acyl-carrier-protein] synthase III (330 aa).

Residues Cys115 and His255 contribute to the active site. The segment at 256–260 is ACP-binding; it reads QANFR. Asn285 is an active-site residue.

This sequence belongs to the thiolase-like superfamily. FabH family. As to quaternary structure, homodimer.

Its subcellular location is the cytoplasm. The catalysed reaction is malonyl-[ACP] + acetyl-CoA + H(+) = 3-oxobutanoyl-[ACP] + CO2 + CoA. It functions in the pathway lipid metabolism; fatty acid biosynthesis. Its function is as follows. Catalyzes the condensation reaction of fatty acid synthesis by the addition to an acyl acceptor of two carbons from malonyl-ACP. Catalyzes the first condensation reaction which initiates fatty acid synthesis and may therefore play a role in governing the total rate of fatty acid production. Possesses both acetoacetyl-ACP synthase and acetyl transacylase activities. Its substrate specificity determines the biosynthesis of branched-chain and/or straight-chain of fatty acids. The sequence is that of Beta-ketoacyl-[acyl-carrier-protein] synthase III from Helicobacter pylori (strain HPAG1).